The primary structure comprises 1412 residues: DNA-directed RNA polymerase subunit beta' (1412 aa).

The Zn(2+) site is built by Cys70, Cys72, Cys85, and Cys88. The Mg(2+) site is built by Asp460, Asp462, and Asp464. Residues Cys819, Cys893, Cys900, and Cys903 each contribute to the Zn(2+) site. Residues 1392 to 1412 (EEAFEFGTPSAPAEEPQHPAE) are disordered.

Belongs to the RNA polymerase beta' chain family. In terms of assembly, the RNAP catalytic core consists of 2 alpha, 1 beta, 1 beta' and 1 omega subunit. When a sigma factor is associated with the core the holoenzyme is formed, which can initiate transcription. Mg(2+) is required as a cofactor. The cofactor is Zn(2+).

It catalyses the reaction RNA(n) + a ribonucleoside 5'-triphosphate = RNA(n+1) + diphosphate. In terms of biological role, DNA-dependent RNA polymerase catalyzes the transcription of DNA into RNA using the four ribonucleoside triphosphates as substrates. The polypeptide is DNA-directed RNA polymerase subunit beta' (Burkholderia mallei (strain NCTC 10247)).